The following is a 773-amino-acid chain: MTLYSPEFSESEQSKIDAEFSRLTENKSVYLDHAGTTLYAESQVKAAAEQLQRNVICNPHTCRLTGDFVDQVRYKVLEFFNTTSEDYHVIFTANATASLSLVAENFDFGSFGNFHFCQENHTSVLGMRERVSHAKGIYMLTEREITGCSLQNGSSKEKPTDPGRSLVTFSAQCNFSGYKIPLDAIGNIQENGLHTPGKHIWGTEGKTSNNDYYICLDAASFVATNPLDLKRYRPDFVCLSFYKIFGYPTGVGALLVSKRGAEAFRDRKFFGGGTINYAYPHTMEYQLRESFHQRYEDGTLPFLAIVGLLEGFRTLERIVPKTKELATMERISRHVHGLAKYLEDQLKQLKHPNGEPLIQLYNKAGYQDRTRQGGIVAFNVRTDSGDYVGFGEIACVAALHGILLRTGCFCNIGACQYYLGLDGDAMDAIYKRAGRICGDYFDLIDGQPTGAVRVSFGYMTTIHDVEELLKMLRSSYLATKPQQRILFIEEQAGQLPPVLQKRVQNLRPKLLQMAIFPVKSCAAFKIEGYLKSWPLTDQGLKYDREWMIVDMNGMALTQKRCTELCLIRPLIKNDVLELHFGDSCVSVPLSLEDQAADSAKCVSKVCRQPVEGLDCGERVAEWLSTNLGQDGLRLLRQSGQRNSSKDQQKLSLVNQAQFLLVNRSSVRSLQFEEPLDDTVDRFRANIIIDTGLAFEELSFKQLSIGKVQFQVQGPCQRCDMICINQKTGERSPETLTTISRLQSGRMRFGIYITRISKDTGDLQLSCGDTVLVE.

At lysine 243 the chain carries N6-(pyridoxal phosphate)lysine. The active site involves cysteine 410. The region spanning 632–773 (LRLLRQSGQR…LSCGDTVLVE (142 aa)) is the MOSC domain. Serine 731 bears the Phosphoserine mark.

The protein belongs to the class-V pyridoxal-phosphate-dependent aminotransferase family. MOCOS subfamily. Pyridoxal 5'-phosphate serves as cofactor.

The enzyme catalyses Mo-molybdopterin + L-cysteine + AH2 = thio-Mo-molybdopterin + L-alanine + A + H2O. It participates in cofactor biosynthesis; molybdopterin biosynthesis. In terms of biological role, sulfurates the molybdenum cofactor. Sulfation of molybdenum is essential for xanthine dehydrogenase (XDH) and aldehyde oxidase (ADO) enzymes in which molybdenum cofactor is liganded by 1 oxygen and 1 sulfur atom in active form. The sequence is that of Molybdenum cofactor sulfurase from Drosophila ananassae (Fruit fly).